Consider the following 352-residue polypeptide: RING finger protein 39 (352 aa).

The RING-type zinc-finger motif lies at 20–67 (CPLCGGPFEDPVLLACEHSFCRSCLARCWGSPAAPGSEEATPSCPCCG). A disordered region spans residues 98–118 (PGARTGRRRGGRIPTMGCLDP). The region spanning 142 to 352 (EDLPEDYPVV…APLRIVPGEA (211 aa)) is the B30.2/SPRY domain.

In terms of tissue distribution, expressed in the hippocampus. Expression is rapidly up-regulated in granule cells of the dentate gyrus after LTP induction.

Its subcellular location is the cytoplasm. The catalysed reaction is S-ubiquitinyl-[E2 ubiquitin-conjugating enzyme]-L-cysteine + [acceptor protein]-L-lysine = [E2 ubiquitin-conjugating enzyme]-L-cysteine + N(6)-ubiquitinyl-[acceptor protein]-L-lysine.. Its pathway is protein modification; protein ubiquitination. In terms of biological role, plays an inhibitory role in anti-RNA viral innate immunity by targeting the adapter DDX3X and promoting its 'Lys-48'-linked polyubiquitination. Alternatively, enhances the cGAS-STING pathway activation by promoting 'Lys-63'-linked ubiquitination of STING1, facilitating the STING1-TBK1 complex formation and STING1 activation. The chain is RING finger protein 39 (Rnf39) from Rattus norvegicus (Rat).